A 494-amino-acid chain; its full sequence is Serine/threonine-protein kinase cst-1 (494 aa).

A disordered region spans residues 1–27 (MPPSTDSSRRNSEEGFSDGFKLDSSAL). The Protein kinase domain maps to 35-286 (FDIVGKLGEG…ALRLCEHTFI (252 aa)). Residues 41-49 (LGEGSYGSV) and K64 contribute to the ATP site. The Proton acceptor role is filled by D154. A disordered region spans residues 364 to 413 (IPKSAYGSSRNNGSPRVQPPGHTASACDPSNNPPFAEEGTGPNFQIGTSE). Positions 369–378 (YGSSRNNGSP) are enriched in polar residues. An SARAH domain is found at 443 to 490 (FEFLRNITLDELIRRKESLDSEMEEEIRELQRRYKTKRQPILDVIEIK).

It belongs to the protein kinase superfamily. STE Ser/Thr protein kinase family. STE20 subfamily. It depends on Mg(2+) as a cofactor. Proteolytically cleaved by caspase-3 during apoptosis which results in kinase activation.

It catalyses the reaction L-seryl-[protein] + ATP = O-phospho-L-seryl-[protein] + ADP + H(+). The enzyme catalyses L-threonyl-[protein] + ATP = O-phospho-L-threonyl-[protein] + ADP + H(+). Functionally, serine/threonine-protein kinase which extends lifespan and delays tissue aging, probably by activating daf-16. The chain is Serine/threonine-protein kinase cst-1 (cst-1) from Caenorhabditis briggsae.